Here is a 135-residue protein sequence, read N- to C-terminus: Thyrostimulin beta-5 subunit (135 aa).

The N-terminal stretch at 1-19 (MVMPLVLSLALTPPPLCHA) is a signal peptide. 5 disulfide bridges follow: Cys30/Cys87, Cys54/Cys102, Cys63/Cys118, Cys67/Cys120, and Cys123/Cys130.

This sequence belongs to the glycoprotein hormones subunit beta family. Heterodimer with GPHA2; non-covalently-linked. In terms of tissue distribution, expressed by the venom duct.

Its subcellular location is the secreted. The protein is Thyrostimulin beta-5 subunit of Conus victoriae (Queen Victoria cone).